The sequence spans 78 residues: Sec-independent protein translocase protein TatA (78 aa).

Residues 1–21 (MGSLSIWHWIVVIGVVLLLFG) form a helical membrane-spanning segment. A compositionally biased stretch (basic and acidic residues) spans 42–60 (GLQDDEKTAEKPEPVKSID). The interval 42-78 (GLQDDEKTAEKPEPVKSIDHTAPPAAAPRTDVGSKVV) is disordered.

Belongs to the TatA/E family. The Tat system comprises two distinct complexes: a TatABC complex, containing multiple copies of TatA, TatB and TatC subunits, and a separate TatA complex, containing only TatA subunits. Substrates initially bind to the TatABC complex, which probably triggers association of the separate TatA complex to form the active translocon.

The protein resides in the cell inner membrane. In terms of biological role, part of the twin-arginine translocation (Tat) system that transports large folded proteins containing a characteristic twin-arginine motif in their signal peptide across membranes. TatA could form the protein-conducting channel of the Tat system. This Rhodopseudomonas palustris (strain BisB18) protein is Sec-independent protein translocase protein TatA.